Reading from the N-terminus, the 368-residue chain is PPE family immunomodulator PPE68 (368 aa).

Disordered stretches follow at residues 255–280 (LGTS…LLRA) and 312–368 (AAAG…EDDW). Positions 312 to 327 (AAAGSSATGGAAPVGA) are enriched in low complexity. Residues 354-368 (REEDDEDDWDEEDDW) show a composition bias toward acidic residues.

This sequence belongs to the mycobacterial PPE family. Homodimer. Interacts with PE35. PE35/PPE68 complex interacts with human TLR2.

It localises to the secreted. The protein localises to the cell wall. Its subcellular location is the cell membrane. It is found in the cell surface. Its function is as follows. Plays a major role in RD1-associated pathogenesis, and may contribute to the establishment and maintenance of M.tuberculosis infection. Together with PE35, stimulates the secretion of IL-10 and MCP-1 from human macrophages, via the interaction with human Toll-like receptor 2 (TLR2). The polypeptide is PPE family immunomodulator PPE68 (PPE68) (Mycobacterium tuberculosis (strain CDC 1551 / Oshkosh)).